Consider the following 429-residue polypeptide: High mobility group nucleosome-binding domain-containing protein 5 (429 aa).

Positions 1–429 (MPKRKAAGDA…GEKGEPVSTV (429 aa)) are disordered. The residue at position 29 (threonine 29) is a Phosphothreonine. Residues 35 to 44 (KRASTSRKTK) are compositionally biased toward basic residues. Lysine 64 is covalently cross-linked (Glycyl lysine isopeptide (Lys-Gly) (interchain with G-Cter in SUMO2)). Position 90 is a phosphoserine (serine 90). Composition is skewed to basic and acidic residues over residues 92 to 101 (METEEVKEQI) and 109 to 124 (GGEK…KNDE). Residue lysine 98 forms a Glycyl lysine isopeptide (Lys-Gly) (interchain with G-Cter in SUMO1); alternate linkage. Lysine 98 is covalently cross-linked (Glycyl lysine isopeptide (Lys-Gly) (interchain with G-Cter in SUMO2); alternate). Lysine 121 is covalently cross-linked (Glycyl lysine isopeptide (Lys-Gly) (interchain with G-Cter in SUMO2)). The segment covering 133–152 (EKDEDEKEHEDTGEEGEDGE) has biased composition (acidic residues). Residues 153–195 (REGGLKEKPDVAEIEDAKEAKDDEEKEDKEKEDDKGGDGKKEE) are compositionally biased toward basic and acidic residues. Positions 196–209 (EKDDEGEAETEEEV) are enriched in acidic residues. Basic and acidic residues-rich tracts occupy residues 210-387 (KEQQ…NEDR) and 413-429 (NKDF…VSTV).

It belongs to the HMGN family. As to expression, expressed in trophoblast giant cells.

The protein localises to the nucleus. Its function is as follows. Preferentially binds to euchromatin and modulates cellular transcription by counteracting linker histone-mediated chromatin compaction. The polypeptide is High mobility group nucleosome-binding domain-containing protein 5 (Rattus norvegicus (Rat)).